A 302-amino-acid chain; its full sequence is Nucleotide-binding protein SE_0548 (302 aa).

18 to 25 (GMSGAGKS) provides a ligand contact to ATP. 69 to 72 (DLRG) contributes to the GTP binding site.

It belongs to the RapZ-like family.

In terms of biological role, displays ATPase and GTPase activities. This Staphylococcus epidermidis (strain ATCC 12228 / FDA PCI 1200) protein is Nucleotide-binding protein SE_0548.